We begin with the raw amino-acid sequence, 291 residues long: Protein-export membrane protein SecF (291 aa).

A run of 6 helical transmembrane segments spans residues 19–39 (LVVIPLIILAVALLIIASWYV), 134–154 (LALGGVGVAFLGMSVLVFLMF), 156–176 (VFVPSIAVVVSAFSDIAISVA), 187–209 (LGTVAALLMIIGYSVDSDILLNN), 226–246 (MRTGVTMTLTSIIAMSVMAAV), and 256–278 (AAIGTVLVFGLIADLMNTYLLNL).

It belongs to the SecD/SecF family. SecF subfamily. Part of the protein translocation apparatus. Forms a complex with SecD.

The protein resides in the cell membrane. In terms of biological role, involved in protein export. The polypeptide is Protein-export membrane protein SecF (Haloquadratum walsbyi (strain DSM 16790 / HBSQ001)).